We begin with the raw amino-acid sequence, 150 residues long: MADVQERLKKLGASARIGTGKGTPRRKVKRAPARSGADDKKLQQSLKKLNVQPIQAIEEVNMFKSDGNVIHFAAPKVHAAVPSNTFAIYGNGEDKELTELVPGILNQLGPDSLASLRKLAESYQNMQQKKDDDDEIPDLVAGESFENKVE.

Disordered stretches follow at residues 1–45 (MADV…LQQS) and 123–150 (YQNM…NKVE). The segment covering 23-32 (TPRRKVKRAP) has biased composition (basic residues). Residues 36–101 (GADDKKLQQS…GEDKELTELV (66 aa)) enclose the NAC-A/B domain.

Belongs to the NAC-beta family. In terms of assembly, part of the nascent polypeptide-associated complex (NAC), consisting of EGD2 and EGD1. NAC associates with ribosomes via EGD1.

The protein localises to the cytoplasm. It is found in the nucleus. Functionally, component of the nascent polypeptide-associated complex (NAC), a dynamic component of the ribosomal exit tunnel, protecting the emerging polypeptides from interaction with other cytoplasmic proteins to ensure appropriate nascent protein targeting. The NAC complex also promotes mitochondrial protein import by enhancing productive ribosome interactions with the outer mitochondrial membrane and blocks the inappropriate interaction of ribosomes translating non-secretory nascent polypeptides with translocation sites in the membrane of the endoplasmic reticulum. EGD1 may act as a transcription factor that exert a negative effect on the expression of several genes that are transcribed by RNA polymerase II. This is Nascent polypeptide-associated complex subunit beta (EGD1) from Chaetomium globosum (strain ATCC 6205 / CBS 148.51 / DSM 1962 / NBRC 6347 / NRRL 1970) (Soil fungus).